Reading from the N-terminus, the 494-residue chain is Glutamate decarboxylase 2 (494 aa).

Lys276 is subject to N6-(pyridoxal phosphate)lysine. The tract at residues 463 to 494 is calmodulin-binding; it reads VKEKKMEKEILMEVIVGWRKFVKERKKMNGVC.

Belongs to the group II decarboxylase family. Homohexamer. Interacts with calmodulin. Pyridoxal 5'-phosphate is required as a cofactor. In terms of tissue distribution, expressed in roots, inflorescence stems, flowers, siliques and leaves.

It carries out the reaction L-glutamate + H(+) = 4-aminobutanoate + CO2. Up-regulated by calmodulin binding at physiological pH. Its function is as follows. Catalyzes the conversion of glutamate to 4-aminobutanoate (GABA). The calmodulin-binding is calcium-dependent and it is proposed to directly or indirectly form a calcium regulated control of GABA biosynthesis. In Arabidopsis thaliana (Mouse-ear cress), this protein is Glutamate decarboxylase 2 (GAD2).